The following is a 234-amino-acid chain: Orotate phosphoribosyltransferase (234 aa).

Lys37 is a 5-phospho-alpha-D-ribose 1-diphosphate binding site. 45–46 (FF) is a binding site for orotate. 5-phospho-alpha-D-ribose 1-diphosphate contacts are provided by residues 83-84 (YK), Arg109, Lys110, Lys113, His115, and 134-142 (DDVISAGTS). Orotate is bound by residues Ser138 and Arg166.

The protein belongs to the purine/pyrimidine phosphoribosyltransferase family. PyrE subfamily. In terms of assembly, homodimer. The cofactor is Mg(2+).

It catalyses the reaction orotidine 5'-phosphate + diphosphate = orotate + 5-phospho-alpha-D-ribose 1-diphosphate. It participates in pyrimidine metabolism; UMP biosynthesis via de novo pathway; UMP from orotate: step 1/2. Functionally, catalyzes the transfer of a ribosyl phosphate group from 5-phosphoribose 1-diphosphate to orotate, leading to the formation of orotidine monophosphate (OMP). This Methylibium petroleiphilum (strain ATCC BAA-1232 / LMG 22953 / PM1) protein is Orotate phosphoribosyltransferase.